A 283-amino-acid chain; its full sequence is MTTSPGTVESTTPVSGQLRTVLSAGERPARATAVSATLTHLWRAMMAFKHFPVQLIDIVLMPLIFLLMFTYLFGGAFADSTEEYLQFYLPGVTVQAVVMMTVYTGTSLNTDIHKGVFDRFRTLPFWQPATLAGSLLGDVLRYVVALATTVFLGLLLGFRADGGFLGVVGAMLVLIVFGFSVSWIFAALGVVASEPERVSGTSMIVLYPLLFMSNIFVMPETMPGWMQAIVDANPMSHAATASRELMHGTAGFWDVGLVLCVSAGLVAVFAPLTMRLYRNKNAH.

An ABC transmembrane type-2 domain is found at 53–280 (VQLIDIVLMP…PLTMRLYRNK (228 aa)). Transmembrane regions (helical) follow at residues 58–78 (IVLM…GAFA), 85–105 (LQFY…VYTG), 150–170 (VFLG…VVGA), 171–191 (MLVL…LGVV), 198–218 (VSGT…IFVM), and 252–272 (FWDV…FAPL).

This sequence belongs to the ABC-2 integral membrane protein family. The complex is probably composed of two ATP-binding proteins (DrrA1) and two transmembrane proteins (DrrB1).

It localises to the cell membrane. Part of the ABC transporter complex DrrA1B1 involved in daunorubicin efflux. Responsible for the translocation of the substrate across the membrane. Confers self-resistance to daunorubicin, an antibiotic produced by S.coeruleorubidus. The chain is Daunorubicin resistance ABC transporter permease protein DrrB1 from Streptomyces coeruleorubidus.